The chain runs to 141 residues: Large ribosomal subunit protein uL16 (141 aa).

The interval 1-23 (MLMPKRTKYRKQMKGRNRGKAHR) is disordered.

The protein belongs to the universal ribosomal protein uL16 family. As to quaternary structure, part of the 50S ribosomal subunit.

In terms of biological role, binds 23S rRNA and is also seen to make contacts with the A and possibly P site tRNAs. The protein is Large ribosomal subunit protein uL16 of Helicobacter acinonychis (strain Sheeba).